The primary structure comprises 74 residues: Turripeptide OL135 (74 aa).

The N-terminal stretch at 1 to 20 (MKVPIVLMLVLLLIMPLSDG) is a signal peptide. Positions 21–28 (YERKRXXX) are excised as a propeptide.

It belongs to the conopeptide P-like superfamily. In terms of processing, contains 3 disulfide bonds. As to expression, expressed by the venom duct.

It is found in the secreted. In terms of biological role, acts as a neurotoxin by inhibiting an ion channel. This is Turripeptide OL135 from Iotyrris olangoensis (Sea snail).